A 182-amino-acid polypeptide reads, in one-letter code: Vacuolar protein sorting-associated protein 29 (182 aa).

Residue Lys-50 is modified to N6-acetyllysine.

The protein belongs to the VPS29 family. Component of the commander complex consisting of the CCC subcomplex and the retriever subcomplex. Component of the heterotrimeric retriever complex formed by VPS26C, VPS29 and VPS35L; within the complex interacts with VPS35L. Component of the heterotrimeric retromer cargo-selective complex (CSC), also described as vacuolar protein sorting subcomplex (VPS) formed by VPS26 (VPS26A or VPS26B), VPS29 and VPS35. The CSC has a highly elongated structure with VPS26 and VPS29 binding independently at opposite distal ends of VPS35 as central platform. The CSC is believed to associate with variable sorting nexins to form functionally distinct retromer complex variants. The originally described retromer complex (also called SNX-BAR retromer) is a pentamer containing the CSC and a heterodimeric membrane-deforming subcomplex formed between SNX1 or SNX2 and SNX5 or SNX6 (also called SNX-BAR subcomplex); the respective CSC and SNX-BAR subcomplexes associate with low affinity. The CSC associates with SNX3 to form a SNX3-retromer complex. The CSC associates with SNX27, the WASH complex and the SNX-BAR subcomplex to form the SNX27-retromer complex. Interacts with VPS26A, VPS35, SNX1, SNX2, SNX3, SNX27, WASHC5. Interacts with TBC1D5; this interaction is blocked by VPS35L in the retriever complex. Interacts with SNX17; the interaction is indirect; SNX17 (via its C-terminus) interacts with the retriever complex (via VPS26C and VPS35L). Interacts with VPS26B and ANKRD27.

The protein localises to the cytoplasm. The protein resides in the membrane. It localises to the endosome membrane. Its function is as follows. Component of the commander complex that is essential for endosomal recycling of transmembrane cargos; the commander complex is composed of the CCC subcomplex and the retriever subcomplex. Component of the retriever complex, which is a heterotrimeric complex related to retromer cargo-selective complex (CSC) and essential for retromer-independent retrieval and recycling of numerous cargos such as integrin alpha-5/beta-1 (ITGA5:ITGB1). Component of the retromer cargo-selective complex (CSC). The CSC is believed to be the core functional component of retromer or respective retromer complex variants acting to prevent missorting of selected transmembrane cargo proteins into the lysosomal degradation pathway. The recruitment of the CSC to the endosomal membrane involves RAB7A and SNX3. The SNX-BAR retromer mediates retrograde transport of cargo proteins from endosomes to the trans-Golgi network (TGN) and is involved in endosome-to-plasma membrane transport for cargo protein recycling. The SNX3-retromer mediates the retrograde endosome-to-TGN transport of WLS distinct from the SNX-BAR retromer pathway. The SNX27-retromer is believed to be involved in endosome-to-plasma membrane trafficking and recycling of a broad spectrum of cargo proteins. The CSC seems to act as recruitment hub for other proteins, such as the WASH complex and TBC1D5. Required to regulate transcytosis of the polymeric immunoglobulin receptor (pIgR-pIgA). In the endosomes, retriever complex drives the retrieval and recycling of NxxY-motif-containing cargo proteins by coupling to SNX17, a cargo essential for the homeostatic maintenance of numerous cell surface proteins associated with processes that include cell migration, cell adhesion, nutrient supply and cell signaling. The recruitment of the retriever complex to the endosomal membrane involves CCC and WASH complexes. Involved in GLUT1 endosome-to-plasma membrane trafficking; the function is dependent of association with ANKRD27. The sequence is that of Vacuolar protein sorting-associated protein 29 (Vps29) from Mus musculus (Mouse).